The following is a 451-amino-acid chain: Tubulin beta-1 chain (451 aa).

An MREI motif motif is present at residues 1–4 (MREI). Residues Q11, E69, S138, G142, T143, and G144 each coordinate GTP. Position 69 (E69) interacts with Mg(2+). S172 is subject to Phosphoserine; by CDK1. N204 and N226 together coordinate GTP. The interval 432–451 (LEEDEEVTEEAEMEPEDKGH) is disordered. The span at 433–451 (EEDEEVTEEAEMEPEDKGH) shows a compositional bias: acidic residues. E440 bears the 5-glutamyl polyglutamate mark.

The protein belongs to the tubulin family. As to quaternary structure, dimer of alpha and beta chains. A typical microtubule is a hollow water-filled tube with an outer diameter of 25 nm and an inner diameter of 15 nM. Alpha-beta heterodimers associate head-to-tail to form protofilaments running lengthwise along the microtubule wall with the beta-tubulin subunit facing the microtubule plus end conferring a structural polarity. Microtubules usually have 13 protofilaments but different protofilament numbers can be found in some organisms and specialized cells. Interacts with RANBP10. The cofactor is Mg(2+). Post-translationally, some glutamate residues at the C-terminus are polyglutamylated, resulting in polyglutamate chains on the gamma-carboxyl group. Polyglutamylation plays a key role in microtubule severing by spastin (SPAST). SPAST preferentially recognizes and acts on microtubules decorated with short polyglutamate tails: severing activity by SPAST increases as the number of glutamates per tubulin rises from one to eight, but decreases beyond this glutamylation threshold. Glutamylation is also involved in cilia motility. In terms of processing, some glutamate residues at the C-terminus are monoglycylated but not polyglycylated due to the absence of functional TTLL10 in human. Monoglycylation is mainly limited to tubulin incorporated into cilia and flagella axonemes, which is required for their stability and maintenance. Flagella glycylation controls sperm motility. Both polyglutamylation and monoglycylation can coexist on the same protein on adjacent residues, and lowering glycylation levels increases polyglutamylation, and reciprocally. Phosphorylated on Ser-172 by CDK1 during the cell cycle, from metaphase to telophase, but not in interphase. This phosphorylation inhibits tubulin incorporation into microtubules. As to expression, hematopoietic cell-specific. Major isotype in leukocytes, where it represents 50% of all beta-tubulins.

Its subcellular location is the cytoplasm. The protein localises to the cytoskeleton. In terms of biological role, tubulin is the major constituent of microtubules, a cylinder consisting of laterally associated linear protofilaments composed of alpha- and beta-tubulin heterodimers. Microtubules grow by the addition of GTP-tubulin dimers to the microtubule end, where a stabilizing cap forms. Below the cap, tubulin dimers are in GDP-bound state, owing to GTPase activity of alpha-tubulin. This Homo sapiens (Human) protein is Tubulin beta-1 chain (TUBB1).